The primary structure comprises 613 residues: V-type proton ATPase catalytic subunit A isoform 2 (613 aa).

Residue 240–247 (GAFGCGKT) coordinates ATP.

It belongs to the ATPase alpha/beta chains family. V-ATPase is a heteromultimeric enzyme composed of a peripheral catalytic V1 complex (main components: subunits A, B, C, D, E, and F) attached to an integral membrane V0 proton pore complex (main component: the proteolipid protein).

The enzyme catalyses ATP + H2O + 4 H(+)(in) = ADP + phosphate + 5 H(+)(out). Catalytic subunit of the peripheral V1 complex of vacuolar ATPase. V-ATPase vacuolar ATPase is responsible for acidifying a variety of intracellular compartments in eukaryotic cells. This Acetabularia acetabulum (Mermaid's wine glass) protein is V-type proton ATPase catalytic subunit A isoform 2.